A 90-amino-acid chain; its full sequence is MGIKLINIGFGNIVSANRLVAIVSPESAPIKRIIQEARDRGMLIDATYGRRTRAVIITDSDHVILSAVQPETVAHRLSTKDDMAVDEDDE.

Belongs to the RemA family.

This chain is Putative regulatory protein Cbei_1140, found in Clostridium beijerinckii (strain ATCC 51743 / NCIMB 8052) (Clostridium acetobutylicum).